The following is a 392-amino-acid chain: Succinate--CoA ligase [ADP-forming] subunit beta (392 aa).

Positions 9-248 constitute an ATP-grasp domain; that stretch reads KEILRGFGVT…TSEEDPLEVE (240 aa). ATP contacts are provided by residues lysine 50, 57-59, glutamate 103, methionine 106, and glutamate 111; that span reads GRG. Asparagine 203 and aspartate 217 together coordinate Mg(2+). Substrate is bound by residues asparagine 268 and 325-327; that span reads GIV.

Belongs to the succinate/malate CoA ligase beta subunit family. Heterotetramer of two alpha and two beta subunits. Mg(2+) is required as a cofactor.

It catalyses the reaction succinate + ATP + CoA = succinyl-CoA + ADP + phosphate. The catalysed reaction is GTP + succinate + CoA = succinyl-CoA + GDP + phosphate. It functions in the pathway carbohydrate metabolism; tricarboxylic acid cycle; succinate from succinyl-CoA (ligase route): step 1/1. Its function is as follows. Succinyl-CoA synthetase functions in the citric acid cycle (TCA), coupling the hydrolysis of succinyl-CoA to the synthesis of either ATP or GTP and thus represents the only step of substrate-level phosphorylation in the TCA. The beta subunit provides nucleotide specificity of the enzyme and binds the substrate succinate, while the binding sites for coenzyme A and phosphate are found in the alpha subunit. The sequence is that of Succinate--CoA ligase [ADP-forming] subunit beta from Chloroherpeton thalassium (strain ATCC 35110 / GB-78).